Consider the following 856-residue polypeptide: Phosphatidylglycerol lysyltransferase (856 aa).

13 helical membrane passes run 7–27 (ALSI…IYQS), 51–71 (LFML…YDYV), 88–108 (VSWI…AGVG), 128–148 (IAWL…FVAA), 161–181 (PWLW…LAVS), 208–228 (SVVE…AMGI), 235–255 (VFGV…PGGF), 280–300 (IVLY…FFAA), 342–362 (SLSL…SLPI), 375–395 (ALLL…ILPI), 420–440 (FLKG…VLLV), 459–479 (IFAV…AGFI), and 501–521 (HATI…TVVY).

This sequence belongs to the LPG synthase family.

It localises to the cell membrane. The enzyme catalyses L-lysyl-tRNA(Lys) + a 1,2-diacyl-sn-glycero-3-phospho-(1'-sn-glycerol) = a 1,2-diacyl-sn-glycero-3-phospho-1'-(3'-O-L-lysyl)-sn-glycerol + tRNA(Lys). Its function is as follows. Catalyzes the transfer of a lysyl group from L-lysyl-tRNA(Lys) to membrane-bound phosphatidylglycerol (PG), which produces lysylphosphatidylglycerol (LPG), one of the components of the bacterial membrane with a positive net charge. LPG synthesis contributes to the resistance to cationic antimicrobial peptides (CAMPs) and likely protects B.subtilis against its own CAMPs and against those produced by competiting microorganisms (bacteriocins). In fact, the modification of anionic phosphatidylglycerol with positively charged L-lysine results in repulsion of the peptides. This Bacillus subtilis (strain 168) protein is Phosphatidylglycerol lysyltransferase (mprF).